The primary structure comprises 72 residues: Large ribosomal subunit protein bL31 (72 aa).

Residues Cys-17, Cys-19, Cys-37, and Cys-40 each contribute to the Zn(2+) site.

The protein belongs to the bacterial ribosomal protein bL31 family. Type A subfamily. Part of the 50S ribosomal subunit. It depends on Zn(2+) as a cofactor.

Functionally, binds the 23S rRNA. This chain is Large ribosomal subunit protein bL31, found in Clostridium botulinum (strain ATCC 19397 / Type A).